A 163-amino-acid polypeptide reads, in one-letter code: Cytochrome b6-f complex subunit 4 (163 aa).

A run of 3 helical transmembrane segments spans residues 36–56 (LLYIFPVVILGTIACNVGLAV), 95–115 (LLGVLLMVSVPLGLLTVPFLE), and 131–151 (TVFLIGTAVALWLGIGATLPI).

This sequence belongs to the cytochrome b family. PetD subfamily. In terms of assembly, the 4 large subunits of the cytochrome b6-f complex are cytochrome b6, subunit IV (17 kDa polypeptide, petD), cytochrome f and the Rieske protein, while the 4 small subunits are petG, petL, petM and petN. The complex functions as a dimer.

Its subcellular location is the plastid. It is found in the chloroplast thylakoid membrane. In terms of biological role, component of the cytochrome b6-f complex, which mediates electron transfer between photosystem II (PSII) and photosystem I (PSI), cyclic electron flow around PSI, and state transitions. The chain is Cytochrome b6-f complex subunit 4 from Phalaenopsis aphrodite subsp. formosana (Moth orchid).